Reading from the N-terminus, the 384-residue chain is 5-cytosine rRNA methyltransferase NSUN4 (384 aa).

Residues 1-25 (MAALTLRGVRELLKRVDLATVPRRH) constitute a mitochondrion transit peptide. Residues G185, G186, K187, and D204 each contribute to the S-adenosyl-L-methionine site. S206 bears the Phosphoserine mark. Positions 209, 237, 238, and 255 each coordinate S-adenosyl-L-methionine. C310 acts as the Nucleophile in catalysis.

This sequence belongs to the class I-like SAM-binding methyltransferase superfamily. RsmB/NOP family. Heterodimer with MTERFD2/MTERF4; this interaction seems to be required for NSUN4 recruitment to the mitochondrial large ribosomal subunit.

It is found in the mitochondrion. It catalyses the reaction a cytidine in rRNA + S-adenosyl-L-methionine = a 5-methylcytidine in rRNA + S-adenosyl-L-homocysteine + H(+). It carries out the reaction a cytidine in mRNA + S-adenosyl-L-methionine = a 5-methylcytidine in mRNA + S-adenosyl-L-homocysteine + H(+). In terms of biological role, mitochondrial RNA cytosine C(5)-methyltransferase that methylates cytosine to 5-methylcytosine (m5C) in various RNAs, such as rRNAs, mRNAs and some long non-coding RNAs (lncRNAs). Involved in mitochondrial ribosome small subunit (SSU) maturation by catalyzing methylation of mitochondrial 12S rRNA; the function is independent of MTERFD2/MTERF4 and assembled mitochondrial ribosome large subunit (LSU). Targeted to LSU by MTERFD2/MTERF4 and probably is involved in a final step in ribosome biogenesis to ensure that SSU and LSU are assembled. In vitro can methylate 16S rRNA of the LSU; the methylation is enhanced by MTERFD/MTERF4. Also acts as a regulator of innate immunity by marking double-stranded mitochondrial RNAs(mt-dsRNAs) generated in response to stress: catalyzes m5C modification on mitochondrial RNAs, such as a mRNAs and lncRNAs, with a preference for the termini of light-strand lncRNAs, promoting their degradation and cytosolic release. Modified light-strand lncRNAs are then recognized by C1QBP reader and recruited to the mitochondrial degradosome complex, which promotes their degradation. This chain is 5-cytosine rRNA methyltransferase NSUN4, found in Homo sapiens (Human).